The chain runs to 582 residues: MAAITSNVSRLEPMRGISIIIESPEVATATPPPATTTATAEAEAATKQVAPTAKSNSNTEMSLKSQAAGMLLAFGDTAATAKDNLETSYDTAAKSTAAPETNKIYPQLLLRIGGEIAGATASAEAAASAATAAAATATSPTIISCNGEIAASQAAATAADTAATLQHNNTVKIQIESQGQQRTLGKQISVVKLNEGVEEMQQHMCYLVDTSGQYSPCETLDSGTGSDLENHPQQQQQPQQVRSPQLELHLQTTRLMVNEEADHKHSPLETPSPVPKRAYSLTDDSEECDESSNSSLSCDSLHSGGLLPTTLLRDIRFRERASGPLVTKINGRPLQFETDGYYTFHVREHENFRSFGSNSSTEYEAQHFTDEQPGEDFVGFRDIRTAGKLAGNSTIKSAKGTVRGVKNRVRNGVATFLQLQQPNVKNYMEKDVGKVVLYTTSMGIIRDTYAKCANVKKILRTLLIKFEERDIFMSVEYQQEMRERMQDETIRVPQLFVEGQLIGDANIVERLNESGELRQLLRPYKSIATAYTCQTCGGYRMLPCPACNGSKKSMHRNHFTAEFVALKCMNCDEVGLIKCPNC.

A compositionally biased stretch (polar residues) spans 217 to 227 (CETLDSGTGSD). Disordered regions lie at residues 217-244 (CETLDSGTGSDLENHPQQQQQPQQVRSP) and 260-300 (EADH…SCDS). Low complexity predominate over residues 291–300 (SSNSSLSCDS). Positions 423–528 (NVKNYMEKDV…QLLRPYKSIA (106 aa)) constitute a Glutaredoxin domain.

The protein belongs to the GRXCR1 family.

This Drosophila melanogaster (Fruit fly) protein is Glutaredoxin domain-containing cysteine-rich protein CG12206.